The sequence spans 374 residues: Calcium/calmodulin-dependent protein kinase type 1 (374 aa).

Residues tyrosine 20–isoleucine 276 enclose the Protein kinase domain. ATP contacts are provided by residues leucine 26 to valine 34 and lysine 49. A Glycyl lysine isopeptide (Lys-Gly) (interchain with G-Cter in ubiquitin) cross-link involves residue lysine 59. Residue aspartate 141 is the Proton acceptor of the active site. Position 177 is a phosphothreonine; by CaMKK1 and CaMKK2 (threonine 177). The short motif at lysine 263–arginine 264 is the Involved in nuclear import element. The interval isoleucine 276–methionine 316 is autoinhibitory domain. Positions lysine 296–arginine 317 are calmodulin-binding. Positions histidine 315–leucine 321 match the Nuclear export signal motif.

The protein belongs to the protein kinase superfamily. CAMK Ser/Thr protein kinase family. CaMK subfamily. Monomer. Interacts with XPO1. Post-translationally, phosphorylated by CaMKK1 and CaMKK2 on Thr-177. In terms of processing, polybiquitinated by the E3 ubiquitin-protein ligase complex SCF(FBXL12), leading to proteasomal degradation. As to expression, widely expressed.

It is found in the cytoplasm. Its subcellular location is the nucleus. The enzyme catalyses L-seryl-[protein] + ATP = O-phospho-L-seryl-[protein] + ADP + H(+). It carries out the reaction L-threonyl-[protein] + ATP = O-phospho-L-threonyl-[protein] + ADP + H(+). Its activity is regulated as follows. Activated by Ca(2+)/calmodulin. Binding of calmodulin results in conformational change that relieves intrasteric autoinhibition and allows phosphorylation of Thr-177 within the activation loop by CaMKK1 or CaMKK2. Phosphorylation of Thr-177 results in several fold increase in total activity. Unlike CaMK4, is unable to exhibit autonomous activity after Ca(2+)/calmodulin activation. In terms of biological role, calcium/calmodulin-dependent protein kinase that operates in the calcium-triggered CaMKK-CaMK1 signaling cascade and, upon calcium influx, regulates transcription activators activity, cell cycle, hormone production, cell differentiation, actin filament organization and neurite outgrowth. Recognizes the substrate consensus sequence [MVLIF]-x-R-x(2)-[ST]-x(3)-[MVLIF]. Regulates axonal extension and growth cone motility in hippocampal and cerebellar nerve cells. Upon NMDA receptor-mediated Ca(2+) elevation, promotes dendritic growth in hippocampal neurons and is essential in synapses for full long-term potentiation (LTP) and ERK2-dependent translational activation. Downstream of NMDA receptors, promotes the formation of spines and synapses in hippocampal neurons by phosphorylating ARHGEF7/BETAPIX on 'Ser-516', which results in the enhancement of ARHGEF7 activity and activation of RAC1. Promotes neuronal differentiation and neurite outgrowth by activation and phosphorylation of MARK2 on 'Ser-91', 'Ser-92', 'Ser-93' and 'Ser-294'. Promotes nuclear export of HDAC5 and binding to 14-3-3 by phosphorylation of 'Ser-259' and 'Ser-498' in the regulation of muscle cell differentiation. Regulates NUMB-mediated endocytosis by phosphorylation of NUMB on 'Ser-275' and 'Ser-294'. Involved in the regulation of basal and estrogen-stimulated migration of medulloblastoma cells through ARHGEF7/BETAPIX phosphorylation. Is required for proper activation of cyclin-D1/CDK4 complex during G1 progression in diploid fibroblasts. Plays a role in K(+) and ANG2-mediated regulation of the aldosterone synthase (CYP11B2) to produce aldosterone in the adrenal cortex. Phosphorylates EIF4G3/eIF4GII. In vitro phosphorylates CREB1, ATF1, CFTR, MYL9 and SYN1/synapsin I. The polypeptide is Calcium/calmodulin-dependent protein kinase type 1 (Camk1) (Rattus norvegicus (Rat)).